The following is a 735-amino-acid chain: DNA ligase 1 (735 aa).

A compositionally biased stretch (basic and acidic residues) spans 1–11; that stretch reads MAGDKQGDKQA. The segment at 1 to 23 is disordered; that stretch reads MAGDKQGDKQAETTSVPAEARER. Residues 48–52, 97–98, and glutamate 128 each bind NAD(+); these read DAEFD and SL. Residue lysine 130 is the N6-AMP-lysine intermediate of the active site. NAD(+)-binding residues include arginine 151, glutamate 188, lysine 305, and lysine 329. Residues cysteine 423, cysteine 426, cysteine 442, and cysteine 448 each contribute to the Zn(2+) site. The BRCT domain occupies 643–732; it reads EGPRPLEGLT…PEAAADVALS (90 aa).

Belongs to the NAD-dependent DNA ligase family. LigA subfamily. It depends on Mg(2+) as a cofactor. Mn(2+) is required as a cofactor.

The catalysed reaction is NAD(+) + (deoxyribonucleotide)n-3'-hydroxyl + 5'-phospho-(deoxyribonucleotide)m = (deoxyribonucleotide)n+m + AMP + beta-nicotinamide D-nucleotide.. Functionally, DNA ligase that catalyzes the formation of phosphodiester linkages between 5'-phosphoryl and 3'-hydroxyl groups in double-stranded DNA using NAD as a coenzyme and as the energy source for the reaction. It is essential for DNA replication and repair of damaged DNA. This Streptomyces coelicolor (strain ATCC BAA-471 / A3(2) / M145) protein is DNA ligase 1.